The following is a 372-amino-acid chain: Cytochrome b (372 aa).

Helical transmembrane passes span Phe25–Ile45, Trp69–Ile90, Trp105–Leu125, and Phe170–Met190. The heme b site is built by His75 and His89. Heme b-binding residues include His174 and His188. His193 serves as a coordination point for a ubiquinone. A run of 4 helical transmembrane segments spans residues His218–Asn238, Leu280–His300, Leu312–Thr332, and Phe339–Pro358.

It belongs to the cytochrome b family. As to quaternary structure, the cytochrome bc1 complex contains 3 respiratory subunits (MT-CYB, CYC1 and UQCRFS1), 2 core proteins (UQCRC1 and UQCRC2) and probably 6 low-molecular weight proteins. Heme b is required as a cofactor.

It localises to the mitochondrion inner membrane. In terms of biological role, component of the ubiquinol-cytochrome c reductase complex (complex III or cytochrome b-c1 complex) that is part of the mitochondrial respiratory chain. The b-c1 complex mediates electron transfer from ubiquinol to cytochrome c. Contributes to the generation of a proton gradient across the mitochondrial membrane that is then used for ATP synthesis. This chain is Cytochrome b (MT-CYB), found in Pantherophis bairdi (Baird's ratsnake).